Here is a 199-residue protein sequence, read N- to C-terminus: dITP/XTP pyrophosphatase (199 aa).

12–17 (SGNAGK) is a substrate binding site. Asp-73 acts as the Proton acceptor in catalysis. Asp-73 contacts Mg(2+). Residues Ser-74, 157–160 (FGYD), Lys-180, and 185–186 (HR) contribute to the substrate site.

Belongs to the HAM1 NTPase family. As to quaternary structure, homodimer. It depends on Mg(2+) as a cofactor.

It catalyses the reaction XTP + H2O = XMP + diphosphate + H(+). The catalysed reaction is dITP + H2O = dIMP + diphosphate + H(+). The enzyme catalyses ITP + H2O = IMP + diphosphate + H(+). Its function is as follows. Pyrophosphatase that catalyzes the hydrolysis of nucleoside triphosphates to their monophosphate derivatives, with a high preference for the non-canonical purine nucleotides XTP (xanthosine triphosphate), dITP (deoxyinosine triphosphate) and ITP. Seems to function as a house-cleaning enzyme that removes non-canonical purine nucleotides from the nucleotide pool, thus preventing their incorporation into DNA/RNA and avoiding chromosomal lesions. In Neisseria meningitidis serogroup B (strain ATCC BAA-335 / MC58), this protein is dITP/XTP pyrophosphatase.